The primary structure comprises 639 residues: Tetracycline resistance protein TetW (639 aa).

The tr-type G domain occupies 1-243 (MKIINIGILA…VTGLFQPIGE (243 aa)). GTP contacts are provided by residues 10–17 (AHVDAGKT), 74–78 (DTPGH), and 128–131 (NKID).

Belongs to the TRAFAC class translation factor GTPase superfamily. Classic translation factor GTPase family. TetM/TetO subfamily.

Abolishes the inhibitory effect of tetracyclin on protein synthesis by a non-covalent modification of the ribosomes. The protein is Tetracycline resistance protein TetW (tetW) of Butyrivibrio fibrisolvens.